Consider the following 142-residue polypeptide: Hemoglobin subunit alpha-A (142 aa).

The 141-residue stretch at 2 to 142 (VLSGSDKTNV…VGNVLTAKYR (141 aa)) folds into the Globin domain. Residue H59 participates in O2 binding. Residue H88 coordinates heme b.

The protein belongs to the globin family. In terms of assembly, heterotetramer of two alpha chains and two beta chains. In terms of tissue distribution, red blood cells.

In terms of biological role, involved in oxygen transport from the lung to the various peripheral tissues. The sequence is that of Hemoglobin subunit alpha-A (HBAA) from Ara ararauna (Blue-and-yellow macaw).